The following is a 119-amino-acid chain: Large ribosomal subunit protein bL20c (119 aa).

This sequence belongs to the bacterial ribosomal protein bL20 family.

Its subcellular location is the plastid. The protein resides in the chloroplast. Functionally, binds directly to 23S ribosomal RNA and is necessary for the in vitro assembly process of the 50S ribosomal subunit. It is not involved in the protein synthesizing functions of that subunit. This is Large ribosomal subunit protein bL20c from Brachypodium distachyon (Purple false brome).